We begin with the raw amino-acid sequence, 194 residues long: Large ribosomal subunit protein uL6z/uL6y (194 aa).

The residue at position 75 (Thr-75) is a Phosphothreonine.

It belongs to the universal ribosomal protein uL6 family.

In Arabidopsis thaliana (Mouse-ear cress), this protein is Large ribosomal subunit protein uL6z/uL6y (RPL9B).